The sequence spans 150 residues: Ribosome maturation factor RimP (150 aa).

This sequence belongs to the RimP family.

It localises to the cytoplasm. Functionally, required for maturation of 30S ribosomal subunits. This Hahella chejuensis (strain KCTC 2396) protein is Ribosome maturation factor RimP.